The sequence spans 27 residues: Small ribosomal subunit protein bTHX (27 aa).

A compositionally biased stretch (basic residues) spans 1–13; sequence MGKGDRRTRRGKI. The interval 1–27 is disordered; that stretch reads MGKGDRRTRRGKIWRGTYGKYRPRKKK.

The protein belongs to the bacterial ribosomal protein bTHX family. As to quaternary structure, part of the 30S ribosomal subunit.

Functionally, binds at the top of the head of the 30S subunit. It stabilizes a number of different RNA elements and thus is important for subunit structure. This chain is Small ribosomal subunit protein bTHX (rpsU), found in Thermus aquaticus.